We begin with the raw amino-acid sequence, 342 residues long: NAD kinase (342 aa).

Catalysis depends on D66, which acts as the Proton acceptor. NAD(+) contacts are provided by residues 66 to 67 (DG), R71, 141 to 142 (ND), K152, D171, 182 to 187 (TAYAFS), and A206.

This sequence belongs to the NAD kinase family. Requires a divalent metal cation as cofactor.

The protein resides in the cytoplasm. The enzyme catalyses NAD(+) + ATP = ADP + NADP(+) + H(+). In terms of biological role, involved in the regulation of the intracellular balance of NAD and NADP, and is a key enzyme in the biosynthesis of NADP. Catalyzes specifically the phosphorylation on 2'-hydroxyl of the adenosine moiety of NAD to yield NADP. This Bifidobacterium longum (strain NCC 2705) protein is NAD kinase.